Reading from the N-terminus, the 791-residue chain is Phosphoenolpyruvate synthase (791 aa).

Thr416 is modified (phosphothreonine). The active-site Tele-phosphohistidine intermediate is His418. Substrate contacts are provided by Arg508, Arg575, Glu677, Gly698, Ser699, Asn700, and Asp701. Glu677 contributes to the Mg(2+) binding site. Residue Asp701 participates in Mg(2+) binding. Tyr744 is subject to Phosphotyrosine. Residue Cys748 is the Proton donor of the active site.

The protein belongs to the PEP-utilizing enzyme family. Requires Mg(2+) as cofactor.

The enzyme catalyses pyruvate + ATP + H2O = phosphoenolpyruvate + AMP + phosphate + 2 H(+). The protein operates within carbohydrate biosynthesis; gluconeogenesis. Its function is as follows. Catalyzes the phosphorylation of pyruvate to phosphoenolpyruvate. In Pseudomonas aeruginosa (strain UCBPP-PA14), this protein is Phosphoenolpyruvate synthase (ppsA).